A 327-amino-acid chain; its full sequence is Serine/threonine-protein phosphatase PP2A catalytic subunit (327 aa).

Mn(2+) contacts are provided by aspartate 75, histidine 77, aspartate 103, and asparagine 135. Histidine 136 serves as the catalytic Proton donor. Residues histidine 185 and histidine 259 each coordinate Mn(2+). Leucine 327 carries the post-translational modification Leucine methyl ester.

It belongs to the PPP phosphatase family. PP-2A subfamily. Mn(2+) serves as cofactor.

It catalyses the reaction O-phospho-L-seryl-[protein] + H2O = L-seryl-[protein] + phosphate. It carries out the reaction O-phospho-L-threonyl-[protein] + H2O = L-threonyl-[protein] + phosphate. This is Serine/threonine-protein phosphatase PP2A catalytic subunit (pph-1) from Neurospora crassa (strain ATCC 24698 / 74-OR23-1A / CBS 708.71 / DSM 1257 / FGSC 987).